The primary structure comprises 205 residues: Venom allergen 5 (205 aa).

Cystine bridges form between Cys-4–Cys-16, Cys-8–Cys-104, Cys-28–Cys-96, and Cys-171–Cys-188. The region spanning 47–190 (VNEHNRFRQK…MQHHYLICNY (144 aa)) is the SCP domain.

It belongs to the CRISP family. Venom allergen 5-like subfamily. As to expression, expressed by the venom gland.

Its subcellular location is the secreted. This Polistes fuscatus (Paper wasp) protein is Venom allergen 5.